Reading from the N-terminus, the 311-residue chain is Putative ribose-phosphate pyrophosphokinase 2 (311 aa).

ATP-binding positions include 38-40 and 97-98; these read DGE and RQ. Residues H131 and D171 each coordinate Mg(2+). A D-ribose 5-phosphate-binding site is contributed by D219.

This sequence belongs to the ribose-phosphate pyrophosphokinase family. Class I subfamily. Homohexamer. Mg(2+) is required as a cofactor.

It localises to the cytoplasm. It catalyses the reaction D-ribose 5-phosphate + ATP = 5-phospho-alpha-D-ribose 1-diphosphate + AMP + H(+). It functions in the pathway metabolic intermediate biosynthesis; 5-phospho-alpha-D-ribose 1-diphosphate biosynthesis; 5-phospho-alpha-D-ribose 1-diphosphate from D-ribose 5-phosphate (route I): step 1/1. Its function is as follows. Involved in the biosynthesis of the central metabolite phospho-alpha-D-ribosyl-1-pyrophosphate (PRPP) via the transfer of pyrophosphoryl group from ATP to 1-hydroxyl of ribose-5-phosphate (Rib-5-P). This is Putative ribose-phosphate pyrophosphokinase 2 from Listeria monocytogenes serotype 4b (strain F2365).